An 86-amino-acid chain; its full sequence is Large ribosomal subunit protein bL31B (86 aa).

The protein belongs to the bacterial ribosomal protein bL31 family. Type B subfamily. In terms of assembly, part of the 50S ribosomal subunit.

In Streptococcus equi subsp. equi (strain 4047), this protein is Large ribosomal subunit protein bL31B.